The following is a 273-amino-acid chain: SUMO-1 cysteine protease S273R (273 aa).

Active-site residues include histidine 168 and asparagine 187. Residue glutamine 226 participates in substrate binding. Cysteine 232 (nucleophile) is an active-site residue.

Belongs to the peptidase C63 family.

It is found in the host cytoplasm. Its subcellular location is the virion. In terms of biological role, cysteine protease that plays several role during infection including processing of the structural polyprotein or inhibition of the host immune response. Catalyzes the maturation of the pp220 and pp62 polyprotein precursors into core-shell proteins. Plays a role in the disruption of host pyroptosis via specific cleavage of gasdermin D/GSDMD. In addition, strongly decreases the host cGAS-STING signaling by targeting IKBKE via its enzymatic activity. Also impairs host FOXJ1-mediated antiviral effect via degradation of FOXJ1. In Ornithodoros (relapsing fever ticks), this protein is SUMO-1 cysteine protease S273R.